The primary structure comprises 193 residues: Phosphoheptose isomerase (193 aa).

Residues 37 to 193 (IAQSFKNEKK…LIIEKEMQKN (157 aa)) enclose the SIS domain. Residue 52–54 (NGG) coordinates substrate. Zn(2+) is bound by residues His61 and Glu65. Substrate is bound by residues Glu65, 93–94 (ND), 119–121 (STS), Ser124, and Gln172. 2 residues coordinate Zn(2+): Gln172 and His180.

The protein belongs to the SIS family. GmhA subfamily. Homotetramer. The cofactor is Zn(2+).

It is found in the cytoplasm. The catalysed reaction is 2 D-sedoheptulose 7-phosphate = D-glycero-alpha-D-manno-heptose 7-phosphate + D-glycero-beta-D-manno-heptose 7-phosphate. It participates in carbohydrate biosynthesis; D-glycero-D-manno-heptose 7-phosphate biosynthesis; D-glycero-alpha-D-manno-heptose 7-phosphate and D-glycero-beta-D-manno-heptose 7-phosphate from sedoheptulose 7-phosphate: step 1/1. Its function is as follows. Catalyzes the isomerization of sedoheptulose 7-phosphate in D-glycero-D-manno-heptose 7-phosphate. The sequence is that of Phosphoheptose isomerase from Buchnera aphidicola subsp. Acyrthosiphon pisum (strain 5A).